Here is a 294-residue protein sequence, read N- to C-terminus: 1D-myo-inositol 2-acetamido-2-deoxy-alpha-D-glucopyranoside deacetylase (294 aa).

H13, D16, and H148 together coordinate Zn(2+).

This sequence belongs to the MshB deacetylase family. It depends on Zn(2+) as a cofactor.

The catalysed reaction is 1D-myo-inositol 2-acetamido-2-deoxy-alpha-D-glucopyranoside + H2O = 1D-myo-inositol 2-amino-2-deoxy-alpha-D-glucopyranoside + acetate. Functionally, catalyzes the deacetylation of 1D-myo-inositol 2-acetamido-2-deoxy-alpha-D-glucopyranoside (GlcNAc-Ins) in the mycothiol biosynthesis pathway. The protein is 1D-myo-inositol 2-acetamido-2-deoxy-alpha-D-glucopyranoside deacetylase of Geodermatophilus obscurus (strain ATCC 25078 / DSM 43160 / JCM 3152 / CCUG 61914 / KCC A-0152 / KCTC 9177 / NBRC 13315 / NRRL B-3577 / G-20).